Consider the following 357-residue polypeptide: Serine proteinase inhibitor 1 (357 aa).

This sequence belongs to the serpin family. Poxviruses subfamily.

It localises to the host cytoplasm. Functionally, this viral protein may be involved in the regulation of the complement cascade. Involved in red pock formation. The sequence is that of Serine proteinase inhibitor 1 (SPI-1) from Oryctolagus cuniculus (Rabbit).